A 369-amino-acid chain; its full sequence is Delta(12)-oleate desaturase (369 aa).

2 helical membrane passes run 41–61 and 69–89; these read LLSD…YFPL and IAWP…WVIA. The Histidine box-1 signature appears at 90–94; the sequence is HECGH. A helical membrane pass occupies residues 102–122; the sequence is LIDDIVGLFFHSALLVPYFSW. The Histidine box-2 motif lies at 126-130; the sequence is HRRHH. The next 3 membrane-spanning stretches (helical) occupy residues 164-184, 207-227, and 234-254; these read LISL…FNMS, WIQV…LYRI, and FWVM…LVLI. The Histidine box-3 signature appears at 300 to 304; the sequence is HVVHH.

This sequence belongs to the fatty acid desaturase type 1 family.

It is found in the membrane. Its pathway is lipid metabolism; polyunsaturated fatty acid biosynthesis. Functionally, delta(12)-fatty acid desaturase producing in a heterologous system linoleic acid (18:2(9Z,12Z)) and to a lower extent hexadecadienoic acid (16:2(9Z,12Z)). The polypeptide is Delta(12)-oleate desaturase (Trichosanthes kirilowii (Chinese snake gourd)).